Reading from the N-terminus, the 691-residue chain is Elongation factor G 1 (691 aa).

The 275-residue stretch at 8–282 folds into the tr-type G domain; it reads ERVRNIGIAA…AVVDYLPAPQ (275 aa). GTP contacts are provided by residues 17–24, 81–85, and 135–138; these read AHIDAGKT, DTPGH, and NKMD.

Belongs to the TRAFAC class translation factor GTPase superfamily. Classic translation factor GTPase family. EF-G/EF-2 subfamily.

The protein resides in the cytoplasm. Catalyzes the GTP-dependent ribosomal translocation step during translation elongation. During this step, the ribosome changes from the pre-translocational (PRE) to the post-translocational (POST) state as the newly formed A-site-bound peptidyl-tRNA and P-site-bound deacylated tRNA move to the P and E sites, respectively. Catalyzes the coordinated movement of the two tRNA molecules, the mRNA and conformational changes in the ribosome. In Trichodesmium erythraeum (strain IMS101), this protein is Elongation factor G 1.